The sequence spans 379 residues: Queuine tRNA-ribosyltransferase (379 aa).

The active-site Proton acceptor is Asp-94. Residues 94-98 (DSGGF), Asp-148, Gln-191, and Gly-218 each bind substrate. The tract at residues 249 to 255 (GVGSPDS) is RNA binding. Asp-268 (nucleophile) is an active-site residue. The tract at residues 273 to 277 (TRIAR) is RNA binding; important for wobble base 34 recognition. Positions 306, 308, 311, and 337 each coordinate Zn(2+).

Belongs to the queuine tRNA-ribosyltransferase family. As to quaternary structure, homodimer. Within each dimer, one monomer is responsible for RNA recognition and catalysis, while the other monomer binds to the replacement base PreQ1. Requires Zn(2+) as cofactor.

The enzyme catalyses 7-aminomethyl-7-carbaguanine + guanosine(34) in tRNA = 7-aminomethyl-7-carbaguanosine(34) in tRNA + guanine. It participates in tRNA modification; tRNA-queuosine biosynthesis. Functionally, catalyzes the base-exchange of a guanine (G) residue with the queuine precursor 7-aminomethyl-7-deazaguanine (PreQ1) at position 34 (anticodon wobble position) in tRNAs with GU(N) anticodons (tRNA-Asp, -Asn, -His and -Tyr). Catalysis occurs through a double-displacement mechanism. The nucleophile active site attacks the C1' of nucleotide 34 to detach the guanine base from the RNA, forming a covalent enzyme-RNA intermediate. The proton acceptor active site deprotonates the incoming PreQ1, allowing a nucleophilic attack on the C1' of the ribose to form the product. After dissociation, two additional enzymatic reactions on the tRNA convert PreQ1 to queuine (Q), resulting in the hypermodified nucleoside queuosine (7-(((4,5-cis-dihydroxy-2-cyclopenten-1-yl)amino)methyl)-7-deazaguanosine). This chain is Queuine tRNA-ribosyltransferase, found in Bacillus anthracis (strain CDC 684 / NRRL 3495).